Here is a 697-residue protein sequence, read N- to C-terminus: Transmembrane protein 168 (697 aa).

3 helical membrane passes run 36–56 (LGYL…YVRW), 63–83 (LILV…ILYY), and 89–109 (AASL…LCFL). Residue asparagine 111 is glycosylated (N-linked (GlcNAc...) asparagine). 5 helical membrane-spanning segments follow: residues 172 to 192 (MLVE…MLII), 199 to 219 (FLAI…SLET), 223 to 243 (PIAF…DIYF), 265 to 285 (LSVL…AFKL), and 293 to 313 (FVIP…IIFL). Asparagine 337 carries N-linked (GlcNAc...) asparagine glycosylation. The next 2 membrane-spanning stretches (helical) occupy residues 352–372 (FCLI…ILGA) and 380–400 (GIFL…HGLF). N-linked (GlcNAc...) asparagine glycosylation is found at asparagine 533 and asparagine 598.

Belongs to the TMEM168 family.

Its subcellular location is the nucleus membrane. Plays a key role in maintaining the cardiac electrical stability by modulating cell surface expression of SCN5A. Plays a role i the modulation of anxiety behavior by regulating GABAergic neuronal system in the nucleus accumbens. The protein is Transmembrane protein 168 (Tmem168) of Mus musculus (Mouse).